Reading from the N-terminus, the 939-residue chain is Vacuolar membrane protease (939 aa).

At 1–11 the chain is on the cytoplasmic side; that stretch reads MGFNSIFKFRK. A helical membrane pass occupies residues 12–32; that stretch reads TSLSLLLFAVYFIIGILYFID. At 33–356 the chain is on the vacuolar side; sequence KTRYKHSLPI…TFVAIPSTKL (324 aa). N-linked (GlcNAc...) asparagine glycosylation is found at Asn-59, Asn-88, and Asn-114. His-149 and Asp-161 together coordinate Zn(2+). The Proton acceptor role is filled by Glu-193. Zn(2+)-binding residues include Glu-194, Glu-219, and His-293. Residue Asn-326 is glycosylated (N-linked (GlcNAc...) asparagine). A helical transmembrane segment spans residues 357 to 377; that stretch reads FWINIALLIIMPIISIFLFSI. At 378 to 388 the chain is on the cytoplasmic side; the sequence is VKKYNNEIIDS. A helical membrane pass occupies residues 389–409; sequence GNIWWRLPISAMSSGTIIIFT. The Vacuolar segment spans residues 410 to 424; the sequence is TKLIMKWNPYILSRN. A helical transmembrane segment spans residues 425–445; that stretch reads FLLPLIGLTFEFIILNSYILT. At 446-453 the chain is on the cytoplasmic side; the sequence is MFENLSSS. The helical transmembrane segment at 454–474 threads the bilayer; the sequence is FDFKTIAINEISFLFWIVLAY. Topologically, residues 475–491 are vacuolar; that stretch reads QTWKLYDNNYQNTGIYP. A helical membrane pass occupies residues 492-512; it reads FTICYIVMATAGNIGYLFLIF. The Cytoplasmic portion of the chain corresponds to 513–588; that stretch reads KNIEIVEDEE…NQRTILKESK (76 aa). Residues 540–552 are compositionally biased toward basic and acidic residues; sequence YRDEINGRDDSSR. The disordered stretch occupies residues 540–561; it reads YRDEINGRDDSSRDSNSASIPT. The chain crosses the membrane as a helical span at residues 589–609; it reads LVYNYDWIIEFLLVVPFSTFL. The Vacuolar portion of the chain corresponds to 610–636; sequence LYNSLELIMDAVNQTIQETGDLYKVYK. The N-linked (GlcNAc...) asparagine glycan is linked to Asn-622. Residues 637 to 657 form a helical membrane-spanning segment; it reads ILAIGSILISIPTLPFAYKIG. Residues 658 to 663 lie on the Cytoplasmic side of the membrane; that stretch reads CQLGKT. Residues 664-684 form a helical membrane-spanning segment; the sequence is LTFISIGCLLISMALAPFTEM. Residues 685–939 are Vacuolar-facing; it reads NPIKFRFMQV…LVKLTEAMVL (255 aa). Residues Asn-810 and Asn-820 are each glycosylated (N-linked (GlcNAc...) asparagine).

It belongs to the peptidase M28 family. Requires Zn(2+) as cofactor.

It localises to the vacuole membrane. May be involved in vacuolar sorting and osmoregulation. The sequence is that of Vacuolar membrane protease from Vanderwaltozyma polyspora (strain ATCC 22028 / DSM 70294 / BCRC 21397 / CBS 2163 / NBRC 10782 / NRRL Y-8283 / UCD 57-17) (Kluyveromyces polysporus).